Consider the following 449-residue polypeptide: Tripartite motif-containing protein 64 (449 aa).

The segment at Cys-15–Arg-56 adopts an RING-type zinc-finger fold. A B box-type zinc finger spans residues Ser-87 to Ile-128. 4 residues coordinate Zn(2+): Cys-92, His-95, Cys-114, and His-120. A coiled-coil region spans residues Leu-189–Met-225. The B30.2/SPRY domain maps to Leu-269–Thr-449.

Belongs to the TRIM/RBCC family.

In Homo sapiens (Human), this protein is Tripartite motif-containing protein 64 (TRIM64).